The primary structure comprises 320 residues: Cytochrome f (320 aa).

The signal sequence occupies residues 1-35 (MENRNTFSWVKEQMTRSISVSIMIYVITRTSISNA). 4 residues coordinate heme: tyrosine 36, cysteine 56, cysteine 59, and histidine 60. Residues 286–306 (VQGLLFFFASVILAQVFLVLK) traverse the membrane as a helical segment.

It belongs to the cytochrome f family. The 4 large subunits of the cytochrome b6-f complex are cytochrome b6, subunit IV (17 kDa polypeptide, petD), cytochrome f and the Rieske protein, while the 4 small subunits are PetG, PetL, PetM and PetN. The complex functions as a dimer. The cofactor is heme.

It is found in the plastid. The protein localises to the chloroplast thylakoid membrane. Functionally, component of the cytochrome b6-f complex, which mediates electron transfer between photosystem II (PSII) and photosystem I (PSI), cyclic electron flow around PSI, and state transitions. The sequence is that of Cytochrome f from Oryza nivara (Indian wild rice).